Here is a 422-residue protein sequence, read N- to C-terminus: Sphingomyelin phosphodiesterase 2 (422 aa).

Mg(2+) is bound at residue glutamate 49. Residue histidine 272 is the Proton acceptor of the active site. 2 helical membrane-spanning segments follow: residues 325–345 (ALFG…CVLA) and 354–374 (AIML…VYLF). The tract at residues 397–422 (TETQDLGSEPHPTHCRQQEADRAEEK) is disordered. A compositionally biased stretch (basic and acidic residues) spans 412-422 (RQQEADRAEEK).

Belongs to the neutral sphingomyelinase family. Mg(2+) serves as cofactor.

The protein localises to the membrane. It carries out the reaction a sphingomyelin + H2O = phosphocholine + an N-acylsphing-4-enine + H(+). The catalysed reaction is 1-O-octadecyl-sn-glycero-3-phosphocholine + H2O = 1-O-octadecyl-sn-glycerol + phosphocholine + H(+). The enzyme catalyses an N-(acyl)-sphingosylphosphocholine + H2O = an N-acyl-sphingoid base + phosphocholine + H(+). It catalyses the reaction 1-hexadecanoyl-sn-glycero-3-phosphocholine + H2O = 1-hexadecanoyl-sn-glycerol + phosphocholine + H(+). It carries out the reaction a sphingosylphosphocholine + H2O = a sphingoid base + phosphocholine + H(+). The catalysed reaction is 1-O-hexadecyl-sn-glycero-3-phosphocholine + H2O = 1-O-hexadecyl-sn-glycerol + phosphocholine + H(+). It functions in the pathway lipid metabolism; sphingolipid metabolism. In terms of biological role, catalyzes the hydrolysis of sphingomyelin to form ceramide and phosphocholine. Ceramide mediates numerous cellular functions, such as apoptosis and growth arrest, and is capable of regulating these 2 cellular events independently. Also hydrolyzes sphingosylphosphocholine. Hydrolyze 1-acyl-2-lyso-sn-glycero-3-phosphocholine (lyso-PC) and 1-O-alkyl-2-lyso-sn-glycero-3-phosphocholine (lyso-platelet-activating factor). The polypeptide is Sphingomyelin phosphodiesterase 2 (Smpd2) (Rattus norvegicus (Rat)).